A 290-amino-acid polypeptide reads, in one-letter code: Nucleotide-binding protein Xfasm12_0753 (290 aa).

13–20 (GLSGSGKS) is a binding site for ATP. 65–68 (DIRS) serves as a coordination point for GTP.

It belongs to the RapZ-like family.

Its function is as follows. Displays ATPase and GTPase activities. The polypeptide is Nucleotide-binding protein Xfasm12_0753 (Xylella fastidiosa (strain M12)).